Here is a 151-residue protein sequence, read N- to C-terminus: Small ribosomal subunit protein uS11 (151 aa).

The disordered stretch occupies residues 130 to 151; sequence EDVTPIPSDSTRRKGGRRGRRL. Over residues 142 to 151 the composition is skewed to basic residues; the sequence is RKGGRRGRRL.

The protein belongs to the universal ribosomal protein uS11 family.

The protein is Small ribosomal subunit protein uS11 of Aedes aegypti (Yellowfever mosquito).